Consider the following 488-residue polypeptide: Calcium uniporter protein, mitochondrial (488 aa).

Residues 1-74 (MRALVSRTPI…RSFQLSASSR (74 aa)) constitute a mitochondrion transit peptide. Positions 65 to 117 (RSFQLSASSRDKRGPQSAEPDPLERLEVKKVQQQHENEKDDSGRDTKSGGKVA) are disordered. Topologically, residues 75–339 (DKRGPQSAEP…ECDALAHRGA (265 aa)) are mitochondrial matrix. A compositionally biased stretch (basic and acidic residues) spans 86 to 112 (PLERLEVKKVQQQHENEKDDSGRDTKS). Residues 340-361 (QRVALGGFGILAFWWYIVYKLT) form a helical membrane-spanning segment. The Mitochondrial intermembrane portion of the chain corresponds to 362 to 370 (FETDLGWDT). The Selectivity filter signature appears at 368-376 (WDTMEPVTY). A helical membrane pass occupies residues 371–391 (MEPVTYLVSLSTLMGGYLWFL). Residue Glu372 participates in Ca(2+) binding. Residues 392–488 (YHNREISYRS…ERPKDDRDDD (97 aa)) are Mitochondrial matrix-facing. Positions 464-488 (ALKKERRLKNGSQKEERPKDDRDDD) are disordered. Residues 475–488 (SQKEERPKDDRDDD) are compositionally biased toward basic and acidic residues.

This sequence belongs to the MCU (TC 1.A.77) family. Homotetramer, assembles in a dimer or dimers configuration with two interfaces.

The protein resides in the mitochondrion inner membrane. The catalysed reaction is Ca(2+)(in) = Ca(2+)(out). With respect to regulation, inhibited by ruthenium red or its derivative Ru360. Its function is as follows. Highly selective calcium channel localized to the inner mitochondrial membrane, which mediates calcium uptake into the mitochondrial matrix. Mitochondrial calcium homeostasis plays key roles in cellular physiology and regulates ATP production, cytoplasmic calcium signals and activation of cell death pathways. Sufficient to operate as a pore-forming channel without the need of calcium-sensor or auxiliary subunit. The chain is Calcium uniporter protein, mitochondrial from Neosartorya fischeri (strain ATCC 1020 / DSM 3700 / CBS 544.65 / FGSC A1164 / JCM 1740 / NRRL 181 / WB 181) (Aspergillus fischerianus).